Consider the following 401-residue polypeptide: Mannonate dehydratase (401 aa).

Belongs to the mannonate dehydratase family. Fe(2+) is required as a cofactor. It depends on Mn(2+) as a cofactor.

It carries out the reaction D-mannonate = 2-dehydro-3-deoxy-D-gluconate + H2O. It participates in carbohydrate metabolism; pentose and glucuronate interconversion. In terms of biological role, catalyzes the dehydration of D-mannonate. In Brucella melitensis biotype 2 (strain ATCC 23457), this protein is Mannonate dehydratase.